Here is a 95-residue protein sequence, read N- to C-terminus: Protein TusB (95 aa).

Belongs to the DsrH/TusB family. In terms of assembly, heterohexamer, formed by a dimer of trimers. The hexameric TusBCD complex contains 2 copies each of TusB, TusC and TusD. The TusBCD complex interacts with TusE.

It is found in the cytoplasm. Its function is as follows. Part of a sulfur-relay system required for 2-thiolation of 5-methylaminomethyl-2-thiouridine (mnm(5)s(2)U) at tRNA wobble positions. The chain is Protein TusB from Klebsiella pneumoniae subsp. pneumoniae (strain ATCC 700721 / MGH 78578).